Here is an 84-residue protein sequence, read N- to C-terminus: Cell division topological specificity factor (84 aa).

This sequence belongs to the MinE family.

In terms of biological role, prevents the cell division inhibition by proteins MinC and MinD at internal division sites while permitting inhibition at polar sites. This ensures cell division at the proper site by restricting the formation of a division septum at the midpoint of the long axis of the cell. This chain is Cell division topological specificity factor, found in Rhodopseudomonas palustris (strain BisA53).